A 249-amino-acid polypeptide reads, in one-letter code: DNA repair protein RecO (249 aa).

The protein belongs to the RecO family.

Functionally, involved in DNA repair and RecF pathway recombination. In Exiguobacterium sibiricum (strain DSM 17290 / CCUG 55495 / CIP 109462 / JCM 13490 / 255-15), this protein is DNA repair protein RecO.